A 327-amino-acid polypeptide reads, in one-letter code: Eukaryotic translation initiation factor 3 subunit I (327 aa).

WD repeat units lie at residues 8–49, 51–91, 144–183, 188–227, 229–268, and 285–324; these read GHDR…GTYD, HNGV…NSVS, SLQT…DIVN, AHKF…CLKT, KAER…GHFE, and GHFG…LKFD.

The protein belongs to the eIF-3 subunit I family. In terms of assembly, component of the eukaryotic translation initiation factor 3 (eIF-3) complex.

The protein resides in the cytoplasm. Component of the eukaryotic translation initiation factor 3 (eIF-3) complex, which is involved in protein synthesis of a specialized repertoire of mRNAs and, together with other initiation factors, stimulates binding of mRNA and methionyl-tRNAi to the 40S ribosome. The eIF-3 complex specifically targets and initiates translation of a subset of mRNAs involved in cell proliferation. The polypeptide is Eukaryotic translation initiation factor 3 subunit I (Brugia malayi (Filarial nematode worm)).